The following is a 363-amino-acid chain: Succinyl-diaminopimelate desuccinylase (363 aa).

H63 serves as a coordination point for Zn(2+). Residue D65 is part of the active site. D94 lines the Zn(2+) pocket. Residue E123 is the Proton acceptor of the active site. Residues E124, E152, and H337 each coordinate Zn(2+).

Belongs to the peptidase M20A family. DapE subfamily. As to quaternary structure, homodimer. Requires Zn(2+) as cofactor. Co(2+) serves as cofactor.

The catalysed reaction is N-succinyl-(2S,6S)-2,6-diaminopimelate + H2O = (2S,6S)-2,6-diaminopimelate + succinate. Its pathway is amino-acid biosynthesis; L-lysine biosynthesis via DAP pathway; LL-2,6-diaminopimelate from (S)-tetrahydrodipicolinate (succinylase route): step 3/3. Functionally, catalyzes the hydrolysis of N-succinyl-L,L-diaminopimelic acid (SDAP), forming succinate and LL-2,6-diaminopimelate (DAP), an intermediate involved in the bacterial biosynthesis of lysine and meso-diaminopimelic acid, an essential component of bacterial cell walls. The protein is Succinyl-diaminopimelate desuccinylase of Campylobacter concisus (strain 13826).